We begin with the raw amino-acid sequence, 498 residues long: Calcium-binding tyrosine phosphorylation-regulated protein (498 aa).

The RIIa domain occupies 12 to 49 (YGLKTLLEGVSRAILKINPPNITQFAAVYFKELIVFRE). 3 disordered regions span residues 74-107 (GTTQ…TDTE), 135-164 (EETP…SPAA), and 247-279 (VDLG…AYDQ). The segment covering 145–164 (SPKPSTPKAVTPPSSPSPAA) has biased composition (low complexity).

As to quaternary structure, interacts with FSCB. Phosphorylated on tyrosine residues during in vitro capacitation. Dephosphorylation affects its ability to bind calcium. In terms of tissue distribution, expressed in testis.

It localises to the cytoplasm. The protein resides in the cytoskeleton. Its subcellular location is the cell projection. It is found in the cilium. The protein localises to the flagellum. Functionally, may function as a regulator of both motility- and head-associated functions such as capacitation and the acrosome reaction. Binds calcium in vitro. The polypeptide is Calcium-binding tyrosine phosphorylation-regulated protein (CABYR) (Vulpes vulpes (Red fox)).